Reading from the N-terminus, the 167-residue chain is Interferon gamma (167 aa).

An N-terminal signal peptide occupies residues 1-23 (MNYTSFIFAFQLCIILCSSGYYC). A Pyrrolidone carboxylic acid modification is found at Gln24. N-linked (GlcNAc...) asparagine glycans are attached at residues Asn39 and Asn107.

This sequence belongs to the type II (or gamma) interferon family. As to quaternary structure, homodimer. Interacts with IFNGR1 (via extracellular domain); this interaction promotes IFNGR1 dimerization. In terms of tissue distribution, released primarily from activated T lymphocytes.

It localises to the secreted. Its function is as follows. Type II interferon produced by immune cells such as T-cells and NK cells that plays crucial roles in antimicrobial, antiviral, and antitumor responses by activating effector immune cells and enhancing antigen presentation. Primarily signals through the JAK-STAT pathway after interaction with its receptor IFNGR1 to affect gene regulation. Upon IFNG binding, IFNGR1 intracellular domain opens out to allow association of downstream signaling components JAK2, JAK1 and STAT1, leading to STAT1 activation, nuclear translocation and transcription of IFNG-regulated genes. Many of the induced genes are transcription factors such as IRF1 that are able to further drive regulation of a next wave of transcription. Plays a role in class I antigen presentation pathway by inducing a replacement of catalytic proteasome subunits with immunoproteasome subunits. In turn, increases the quantity, quality, and repertoire of peptides for class I MHC loading. Increases the efficiency of peptide generation also by inducing the expression of activator PA28 that associates with the proteasome and alters its proteolytic cleavage preference. Up-regulates as well MHC II complexes on the cell surface by promoting expression of several key molecules such as cathepsins B/CTSB, H/CTSH, and L/CTSL. Participates in the regulation of hematopoietic stem cells during development and under homeostatic conditions by affecting their development, quiescence, and differentiation. This Felis catus (Cat) protein is Interferon gamma (IFNG).